Reading from the N-terminus, the 420-residue chain is Serine hydroxymethyltransferase (420 aa).

(6S)-5,6,7,8-tetrahydrofolate-binding positions include L121 and 125-127; that span reads GHL. The residue at position 230 (K230) is an N6-(pyridoxal phosphate)lysine. A (6S)-5,6,7,8-tetrahydrofolate-binding site is contributed by 355–357; it reads SPF.

Belongs to the SHMT family. Homodimer. It depends on pyridoxal 5'-phosphate as a cofactor.

It is found in the cytoplasm. It catalyses the reaction (6R)-5,10-methylene-5,6,7,8-tetrahydrofolate + glycine + H2O = (6S)-5,6,7,8-tetrahydrofolate + L-serine. The protein operates within one-carbon metabolism; tetrahydrofolate interconversion. It functions in the pathway amino-acid biosynthesis; glycine biosynthesis; glycine from L-serine: step 1/1. Catalyzes the reversible interconversion of serine and glycine with tetrahydrofolate (THF) serving as the one-carbon carrier. This reaction serves as the major source of one-carbon groups required for the biosynthesis of purines, thymidylate, methionine, and other important biomolecules. Also exhibits THF-independent aldolase activity toward beta-hydroxyamino acids, producing glycine and aldehydes, via a retro-aldol mechanism. In Streptococcus gordonii (strain Challis / ATCC 35105 / BCRC 15272 / CH1 / DL1 / V288), this protein is Serine hydroxymethyltransferase.